A 21-amino-acid polypeptide reads, in one-letter code: Alpha-fibrinogenase A1 (21 aa).

The protein belongs to the peptidase S1 family. Snake venom subfamily. As to quaternary structure, monomer. Expressed by the venom gland.

Its subcellular location is the secreted. Inhibited by PMSF, bovine aprotinin (APR), and soybean trypsin inhibitor (STI). Is not inhibited by EDTA, beta-mercaptoethanol, and high temperature (85 degrees Celsius). Its function is as follows. Snake venom serine protease that completely cleaves fibrinogen Aalpha chain (FGA), partially cleaves Bbeta chain (FGB) and has no activity on gamma chain. Is more potent that A2 and A3 alpha-fibrinogenases. Very active within 5 minutes. This is Alpha-fibrinogenase A1 from Crotalus atrox (Western diamondback rattlesnake).